Here is a 414-residue protein sequence, read N- to C-terminus: NADH kinase POS5, mitochondrial (414 aa).

This sequence belongs to the NAD kinase family.

It localises to the mitochondrion matrix. The catalysed reaction is NADH + ATP = ADP + NADPH + H(+). Its function is as follows. Phosphorylates both NADH and NAD(+), with a twofold preference for NADH. Anti-oxidant factor and key source of the cellular reductant NADPH. The polypeptide is NADH kinase POS5, mitochondrial (POS5) (Saccharomyces cerevisiae (strain ATCC 204508 / S288c) (Baker's yeast)).